Consider the following 360-residue polypeptide: UDP-N-acetylglucosamine--N-acetylmuramyl-(pentapeptide) pyrophosphoryl-undecaprenol N-acetylglucosamine transferase (360 aa).

UDP-N-acetyl-alpha-D-glucosamine is bound by residues 13 to 15, Arg164, Ser192, and Gln293; that span reads TGG.

Belongs to the glycosyltransferase 28 family. MurG subfamily.

Its subcellular location is the cell inner membrane. It catalyses the reaction di-trans,octa-cis-undecaprenyl diphospho-N-acetyl-alpha-D-muramoyl-L-alanyl-D-glutamyl-meso-2,6-diaminopimeloyl-D-alanyl-D-alanine + UDP-N-acetyl-alpha-D-glucosamine = di-trans,octa-cis-undecaprenyl diphospho-[N-acetyl-alpha-D-glucosaminyl-(1-&gt;4)]-N-acetyl-alpha-D-muramoyl-L-alanyl-D-glutamyl-meso-2,6-diaminopimeloyl-D-alanyl-D-alanine + UDP + H(+). The protein operates within cell wall biogenesis; peptidoglycan biosynthesis. Cell wall formation. Catalyzes the transfer of a GlcNAc subunit on undecaprenyl-pyrophosphoryl-MurNAc-pentapeptide (lipid intermediate I) to form undecaprenyl-pyrophosphoryl-MurNAc-(pentapeptide)GlcNAc (lipid intermediate II). The sequence is that of UDP-N-acetylglucosamine--N-acetylmuramyl-(pentapeptide) pyrophosphoryl-undecaprenol N-acetylglucosamine transferase from Chromobacterium violaceum (strain ATCC 12472 / DSM 30191 / JCM 1249 / CCUG 213 / NBRC 12614 / NCIMB 9131 / NCTC 9757 / MK).